Here is a 236-residue protein sequence, read N- to C-terminus: Large ribosomal subunit protein uL1 (236 aa).

This sequence belongs to the universal ribosomal protein uL1 family. As to quaternary structure, part of the 50S ribosomal subunit.

Binds directly to 23S rRNA. The L1 stalk is quite mobile in the ribosome, and is involved in E site tRNA release. Functionally, protein L1 is also a translational repressor protein, it controls the translation of the L11 operon by binding to its mRNA. The chain is Large ribosomal subunit protein uL1 from Corynebacterium jeikeium (strain K411).